Reading from the N-terminus, the 738-residue chain is MEHTYQYAWVIPLLPLPVIMSMGFGLFLIPTATKNLRRIWAFPSILLLSIAMVFSLHLSIQQINGSSIYQYLWSWTINNDFSLEFGYLVDPLTSIMLILITTVGILVLIYSDDYMSHDEGYLRFFVYISFFNTSMLGLVTSSNLIQIYFFWELVGMCSYLLIGFWFTRPIAASACQKAFVTNRVGDFGLLLGILGFFWITGSLEFRDLFKIANNWIPNNGINSLLTTLCAFLLFLGAVAKSAQFPLHVWLPDAMEGPTPISALIHAATMVAAGIFLLARLLPLFISLPLLMSFISLVGTITLFLGATLALAQRDIKRSLAYSTMSQLGYMMLALGIGSYQAALFHLITHAYSKALLFLGSGSVIHSMEPLVGYSPDKSQNMVLMGGLRKYVPITRTTFLCGTLSLCGIPPLACFWSKDEILSNSWLYSPFFGIIASFTAGLTAFYMFRIYLLTFDGYLRVHFQNYSSTKEGSLYSISLWGKSISKGVNRDFVLSTMKSGVSFFSQNIPKIPANTRNKIGSFSTPFGAKKTFVYPHETGNTMLFPLLILLLFTLFIGSIGIPFDNGVKDNRILELTILSKWLTPSINLFQENSNSSINSYEFLTNAISSVSLAIFGLFIAYIFYGSAYSFFQNLNFQNSLVKKNPKKSFLDEVKKKIYSWSYNRGYIDFFYTRVFILGIRRLAELTHFFDKGVIDGIINGVGLAGFCIGEEIKYVGGGRISSYLFFFLCYVSLFLFFIP.

The next 17 membrane-spanning stretches (helical) occupy residues 9 to 29, 39 to 59, 89 to 109, 125 to 145, 147 to 167, 185 to 205, 219 to 239, 258 to 278, 280 to 300, 327 to 347, 354 to 374, 396 to 416, 425 to 445, 542 to 562, 610 to 630, 691 to 711, and 717 to 737; these read WVIP…LFLI, IWAF…LHLS, VDPL…LVLI, FVYI…SNLI, IYFF…FWFT, GDFG…SLEF, NGIN…GAVA, TPIS…FLLA, LLPL…VGTI, LGYM…FHLI, ALLF…VGYS, TTFL…CFWS, WLYS…TAFY, LFPL…GIPF, SLAI…YSFF, GVID…GEEI, and GRIS…LFFI.

Belongs to the complex I subunit 5 family. In terms of assembly, NDH is composed of at least 16 different subunits, 5 of which are encoded in the nucleus.

The protein resides in the plastid. It is found in the chloroplast thylakoid membrane. It catalyses the reaction a plastoquinone + NADH + (n+1) H(+)(in) = a plastoquinol + NAD(+) + n H(+)(out). The catalysed reaction is a plastoquinone + NADPH + (n+1) H(+)(in) = a plastoquinol + NADP(+) + n H(+)(out). In terms of biological role, NDH shuttles electrons from NAD(P)H:plastoquinone, via FMN and iron-sulfur (Fe-S) centers, to quinones in the photosynthetic chain and possibly in a chloroplast respiratory chain. The immediate electron acceptor for the enzyme in this species is believed to be plastoquinone. Couples the redox reaction to proton translocation, and thus conserves the redox energy in a proton gradient. The chain is NAD(P)H-quinone oxidoreductase subunit 5, chloroplastic (ndhF) from Saccharum officinarum (Sugarcane).